A 271-amino-acid polypeptide reads, in one-letter code: Calretinin (271 aa).

6 consecutive EF-hand domains span residues 16–51 (LTAT…LEKA), 63–98 (NLGE…EENF), 107–142 (GSST…LLKK), 151–186 (KLQE…QENF), 195–230 (LTSE…LYEK), and 235–270 (MNIQ…SEPP). Residues aspartate 29, aspartate 31, asparagine 33, tyrosine 35, glutamate 40, aspartate 76, asparagine 78, aspartate 80, lysine 82, glutamate 87, aspartate 120, aspartate 122, serine 124, tyrosine 126, glutamate 131, aspartate 164, asparagine 166, aspartate 168, lysine 170, glutamate 175, aspartate 208, aspartate 210, serine 212, tyrosine 214, and glutamate 219 each contribute to the Ca(2+) site. At tyrosine 214 the chain carries Phosphotyrosine.

This sequence belongs to the calbindin family.

The protein localises to the synapse. It localises to the cell projection. The protein resides in the dendrite. Functionally, calcium-binding protein involved in calcium homeostasis and signal transduction. It plays a critical role in buffering intracellular calcium levels and modulating calcium-dependent signaling pathways. Predominantly expressed in specific neuronal populations, influences synaptic plasticity and neuronal excitability, contributing to learning and memory. During embryonic development, it facilitates neuronal differentiation and maturation. The sequence is that of Calretinin (CALB2) from Bos taurus (Bovine).